The chain runs to 324 residues: Methionyl-tRNA formyltransferase (324 aa).

A (6S)-5,6,7,8-tetrahydrofolate-binding site is contributed by 109–112 (SLLP). The tract at residues 305–324 (LHPGESFHKATQDNQGASET) is disordered.

The protein belongs to the Fmt family.

The enzyme catalyses L-methionyl-tRNA(fMet) + (6R)-10-formyltetrahydrofolate = N-formyl-L-methionyl-tRNA(fMet) + (6S)-5,6,7,8-tetrahydrofolate + H(+). In terms of biological role, attaches a formyl group to the free amino group of methionyl-tRNA(fMet). The formyl group appears to play a dual role in the initiator identity of N-formylmethionyl-tRNA by promoting its recognition by IF2 and preventing the misappropriation of this tRNA by the elongation apparatus. This is Methionyl-tRNA formyltransferase from Nitrosomonas europaea (strain ATCC 19718 / CIP 103999 / KCTC 2705 / NBRC 14298).